The chain runs to 199 residues: Probable nicotinate-nucleotide adenylyltransferase (199 aa).

It belongs to the NadD family.

The enzyme catalyses nicotinate beta-D-ribonucleotide + ATP + H(+) = deamido-NAD(+) + diphosphate. It participates in cofactor biosynthesis; NAD(+) biosynthesis; deamido-NAD(+) from nicotinate D-ribonucleotide: step 1/1. In terms of biological role, catalyzes the reversible adenylation of nicotinate mononucleotide (NaMN) to nicotinic acid adenine dinucleotide (NaAD). In Corynebacterium jeikeium (strain K411), this protein is Probable nicotinate-nucleotide adenylyltransferase.